Here is a 240-residue protein sequence, read N- to C-terminus: DISARM protein DrmC (240 aa).

A PLD phosphodiesterase domain is found at 174 to 201; the sequence is GYSSLHAKVIMVDEEKAFVSSANLSYNG. Residues His-179, Lys-181, and Asp-186 contribute to the active site.

The protein belongs to the phospholipase D family.

The protein localises to the cytoplasm. Component of antiviral defense system DISARM (defense island system associated with restriction-modification), composed of DrmE, DrmA, DrmB, DrmC and DrmMII. DISARM is probably a multi-gene restriction module, this subunit is probably a phospholipase or nuclease. Expression of DISARM in B.subtilis (strain BEST7003) confers resistance to phages Nf, phi29, phi105, phi3T, SPO1, SPR and SPP1. Protection is over 10(7)-fold against phi3T, 10(4)-10(5)-fold against Nf, phi29, phi105 and SPR, 100-fold against SPO1 and 10-fold against SPP1. DISARM does not interfere with phage adsorption, but instead interferes with (phi3T) DNA replication early in its cycle, preventing replication, circularization and lysogeny and probably causes phage DNA degradation (DNA is degraded in SPP1-infected cells). The sequence is that of DISARM protein DrmC from Bacillus paralicheniformis (strain ATCC 9945a / NCIMB 11709 / CD-2).